The chain runs to 887 residues: DNA mismatch repair protein MutS (887 aa).

621 to 628 serves as a coordination point for ATP; sequence GPNMGGKS. The interval 828–853 is disordered; the sequence is AEPEPNKPAAAAKTKPASPQPDLFAS. A compositionally biased stretch (low complexity) spans 834–848; that stretch reads KPAAAAKTKPASPQP.

It belongs to the DNA mismatch repair MutS family.

Its function is as follows. This protein is involved in the repair of mismatches in DNA. It is possible that it carries out the mismatch recognition step. This protein has a weak ATPase activity. This Saccharophagus degradans (strain 2-40 / ATCC 43961 / DSM 17024) protein is DNA mismatch repair protein MutS.